The sequence spans 438 residues: Glutamate--tRNA ligase 2 (438 aa).

The 'HIGH' region motif lies at 6–16 (PSPTGDMHTGN). The 'KMSKS' region motif lies at 231–235 (KMSKR). K234 provides a ligand contact to ATP.

This sequence belongs to the class-I aminoacyl-tRNA synthetase family. Glutamate--tRNA ligase type 1 subfamily. As to quaternary structure, monomer.

It is found in the cytoplasm. The catalysed reaction is tRNA(Glu) + L-glutamate + ATP = L-glutamyl-tRNA(Glu) + AMP + diphosphate. Functionally, catalyzes the attachment of glutamate to tRNA(Glu) in a two-step reaction: glutamate is first activated by ATP to form Glu-AMP and then transferred to the acceptor end of tRNA(Glu). The sequence is that of Glutamate--tRNA ligase 2 from Wolinella succinogenes (strain ATCC 29543 / DSM 1740 / CCUG 13145 / JCM 31913 / LMG 7466 / NCTC 11488 / FDC 602W) (Vibrio succinogenes).